A 116-amino-acid polypeptide reads, in one-letter code: U3-theraphotoxin-Lsp1a (116 aa).

The N-terminal stretch at 1 to 17 is a signal peptide; the sequence is MKLSTFIIMISLAVALA. Residues 18 to 50 constitute a propeptide that is removed on maturation; that stretch reads TWPSEHIEGSDSETKLNVELGPYALADRAEKGK.

This sequence belongs to the neurotoxin 25 family. F7 subfamily. In terms of processing, contains 3 disulfide bonds. As to expression, expressed by the venom gland.

Its subcellular location is the secreted. The protein is U3-theraphotoxin-Lsp1a of Lasiodora sp. (strain IBSP 8539) (Brazilian salmon pink birdeater).